We begin with the raw amino-acid sequence, 204 residues long: Pyridoxamine 5'-phosphate oxidase YLR456W homolog (204 aa).

FMN-binding positions include 65-66 (FT) and asparagine 127.

This sequence belongs to the pyridoxamine 5'-phosphate oxidase family. It depends on FMN as a cofactor.

The protein localises to the cytoplasm. Its subcellular location is the nucleus. The protein is Pyridoxamine 5'-phosphate oxidase YLR456W homolog of Saccharomyces cerevisiae (strain ATCC 204508 / S288c) (Baker's yeast).